A 156-amino-acid chain; its full sequence is 6,7-dimethyl-8-ribityllumazine synthase (156 aa).

Residues Phe-22, 57–59 (AYE), and 81–83 (TVI) contribute to the 5-amino-6-(D-ribitylamino)uracil site. Residue 86–87 (GT) coordinates (2S)-2-hydroxy-3-oxobutyl phosphate. His-89 (proton donor) is an active-site residue. Residue Phe-114 participates in 5-amino-6-(D-ribitylamino)uracil binding. Residue Arg-128 participates in (2S)-2-hydroxy-3-oxobutyl phosphate binding.

The protein belongs to the DMRL synthase family. In terms of assembly, forms an icosahedral capsid composed of 60 subunits, arranged as a dodecamer of pentamers.

It carries out the reaction (2S)-2-hydroxy-3-oxobutyl phosphate + 5-amino-6-(D-ribitylamino)uracil = 6,7-dimethyl-8-(1-D-ribityl)lumazine + phosphate + 2 H2O + H(+). It participates in cofactor biosynthesis; riboflavin biosynthesis; riboflavin from 2-hydroxy-3-oxobutyl phosphate and 5-amino-6-(D-ribitylamino)uracil: step 1/2. Catalyzes the formation of 6,7-dimethyl-8-ribityllumazine by condensation of 5-amino-6-(D-ribitylamino)uracil with 3,4-dihydroxy-2-butanone 4-phosphate. This is the penultimate step in the biosynthesis of riboflavin. In Yersinia pseudotuberculosis serotype O:1b (strain IP 31758), this protein is 6,7-dimethyl-8-ribityllumazine synthase.